The following is an 815-amino-acid chain: Neuronal PAS domain-containing protein 2 (815 aa).

Residues 1–10 (MDEDEKDRAK) are compositionally biased toward basic and acidic residues. Residues 1–21 (MDEDEKDRAKRASRNKSEKKR) are disordered. Residues 1–61 (MDEDEKDRAK…VIGFLQKHNE (61 aa)) are sufficient for heterodimer formation with BMAL1, E-box binding and for the effect of NADPH. One can recognise a bHLH domain in the interval 9–59 (AKRASRNKSEKKRRDQFNVLIKELSSMLPGNTRKMDKTTVLEKVIGFLQKH). Residues 82–152 (NEEFTQLMLE…KMLSSCMLMT (71 aa)) form the PAS 1 domain. Residues H119 and H171 each coordinate heme b. One can recognise a PAS 2 domain in the interval 237–307 (FLKEMCIVEE…RCHEHLMQFG (71 aa)). The PAC domain occupies 311-354 (SCCYRFLTKGQQWIWLQTHYYITYHQWNSKPEFIVCTHMVVSYA). The segment covering 405–420 (RTPSVSSRSSPKSSHT) has biased composition (low complexity). 3 disordered regions span residues 405–467 (RTPS…SLPS), 584–656 (PGQI…AAGC), and 728–815 (FATT…QPLR). Polar residues-rich tracts occupy residues 425-462 (PASTPTKLTAEASTPLQRTSSTQQDLSAHRLSQPTALQ), 588-608 (ASPQTPSQQVLREASVISSQG), and 616-630 (ELTTGSSRPTRSTAT). 2 stretches are compositionally biased toward low complexity: residues 633–655 (GPSTSLSRRGPGPSSGPGASAAG) and 732–752 (PPSQSSSLPPMQLQHQQHQQQ). Over residues 753–786 (RYLQVQTPSSLHNEQTDSLLLSSYSPQQGNMGYH) the composition is skewed to polar residues. The span at 787–815 (QTQQQQQQQQLPRRSNSLSESSNLPQPLR) shows a compositional bias: low complexity.

In terms of assembly, component of the circadian clock oscillator which includes the CRY proteins, CLOCK or NPAS2, BMAL1 or BMAL2, CSNK1D and/or CSNK1E, TIMELESS and the PER proteins. Efficient DNA binding requires dimerization with another bHLH protein. Forms a heterodimer with BMAL1 and this heterodimerization is required for E-box-dependent transactivation. Requires heme as cofactor. As to expression, expressed in the retinal photoreceptor cells (at protein level). Expressed in the pineal gland and retina.

Its subcellular location is the nucleus. Carbon monoxide (CO) and the redox state of the cell can modulate the transcriptional activity of the NPAS2-BMAL1 heterodimer. NADH and NADPH enhance the DNA-binding activity of the heterodimer whereas CO binds the heme group in NPAS2 and inhibits the DNA-binding activity of the heterodimer. In terms of biological role, transcriptional activator which forms a core component of the circadian clock. The circadian clock, an internal time-keeping system, regulates various physiological processes through the generation of approximately 24 hour circadian rhythms in gene expression, which are translated into rhythms in metabolism and behavior. It is derived from the Latin roots 'circa' (about) and 'diem' (day) and acts as an important regulator of a wide array of physiological functions including metabolism, sleep, body temperature, blood pressure, endocrine, immune, cardiovascular, and renal function. Consists of two major components: the central clock, residing in the suprachiasmatic nucleus (SCN) of the brain, and the peripheral clocks that are present in nearly every tissue and organ system. Both the central and peripheral clocks can be reset by environmental cues, also known as Zeitgebers (German for 'timegivers'). The predominant Zeitgeber for the central clock is light, which is sensed by retina and signals directly to the SCN. The central clock entrains the peripheral clocks through neuronal and hormonal signals, body temperature and feeding-related cues, aligning all clocks with the external light/dark cycle. Circadian rhythms allow an organism to achieve temporal homeostasis with its environment at the molecular level by regulating gene expression to create a peak of protein expression once every 24 hours to control when a particular physiological process is most active with respect to the solar day. Transcription and translation of core clock components (CLOCK, NPAS2, BMAL1, BMAL2, PER1, PER2, PER3, CRY1 and CRY2) plays a critical role in rhythm generation, whereas delays imposed by post-translational modifications (PTMs) are important for determining the period (tau) of the rhythms (tau refers to the period of a rhythm and is the length, in time, of one complete cycle). A diurnal rhythm is synchronized with the day/night cycle, while the ultradian and infradian rhythms have a period shorter and longer than 24 hours, respectively. Disruptions in the circadian rhythms contribute to the pathology of cardiovascular diseases, cancer, metabolic syndromes and aging. A transcription/translation feedback loop (TTFL) forms the core of the molecular circadian clock mechanism. Transcription factors, CLOCK or NPAS2 and BMAL1 or BMAL2, form the positive limb of the feedback loop, act in the form of a heterodimer and activate the transcription of core clock genes and clock-controlled genes (involved in key metabolic processes), harboring E-box elements (5'-CACGTG-3') within their promoters. The core clock genes: PER1/2/3 and CRY1/2 which are transcriptional repressors form the negative limb of the feedback loop and interact with the CLOCK|NPAS2-BMAL1|BMAL2 heterodimer inhibiting its activity and thereby negatively regulating their own expression. This heterodimer also activates nuclear receptors NR1D1/2 and RORA/B/G, which form a second feedback loop and which activate and repress BMAL1 transcription, respectively. NPAS2 positively regulates the circadian expression of AANAT in the retinal photoreceptor cells. The protein is Neuronal PAS domain-containing protein 2 (NPAS2) of Gallus gallus (Chicken).